A 145-amino-acid chain; its full sequence is MIALIQRVSRASVVVDNQTLGSIDKGLLVLLGVEREDNREKMEKLATKVMSYRVFSDENGKMNLNLEQVGGSLLVVSQFTLAADTGRGLRPSFSGAGTPDQALTLYEEFVAFCRDKGVTTETGQFGADMQVSLVNDGPVTFNLQV.

The Gly-cisPro motif, important for rejection of L-amino acids signature appears at 137–138 (GP).

This sequence belongs to the DTD family. As to quaternary structure, homodimer.

It localises to the cytoplasm. It catalyses the reaction glycyl-tRNA(Ala) + H2O = tRNA(Ala) + glycine + H(+). The enzyme catalyses a D-aminoacyl-tRNA + H2O = a tRNA + a D-alpha-amino acid + H(+). In terms of biological role, an aminoacyl-tRNA editing enzyme that deacylates mischarged D-aminoacyl-tRNAs. Also deacylates mischarged glycyl-tRNA(Ala), protecting cells against glycine mischarging by AlaRS. Acts via tRNA-based rather than protein-based catalysis; rejects L-amino acids rather than detecting D-amino acids in the active site. By recycling D-aminoacyl-tRNA to D-amino acids and free tRNA molecules, this enzyme counteracts the toxicity associated with the formation of D-aminoacyl-tRNA entities in vivo and helps enforce protein L-homochirality. This Shewanella putrefaciens (strain CN-32 / ATCC BAA-453) protein is D-aminoacyl-tRNA deacylase.